Here is a 462-residue protein sequence, read N- to C-terminus: Glutamate--tRNA ligase 1 (462 aa).

A 'HIGH' region motif is present at residues 8–18; sequence PSPTGYLHIGG. Positions 237–241 match the 'KMSKS' region motif; it reads KLSKR. Position 240 (K240) interacts with ATP.

It belongs to the class-I aminoacyl-tRNA synthetase family. Glutamate--tRNA ligase type 1 subfamily. In terms of assembly, monomer.

Its subcellular location is the cytoplasm. It carries out the reaction tRNA(Glu) + L-glutamate + ATP = L-glutamyl-tRNA(Glu) + AMP + diphosphate. Its function is as follows. Catalyzes the attachment of glutamate to tRNA(Glu) in a two-step reaction: glutamate is first activated by ATP to form Glu-AMP and then transferred to the acceptor end of tRNA(Glu). The protein is Glutamate--tRNA ligase 1 of Sulfurimonas denitrificans (strain ATCC 33889 / DSM 1251) (Thiomicrospira denitrificans (strain ATCC 33889 / DSM 1251)).